We begin with the raw amino-acid sequence, 278 residues long: HTH-type transcriptional activator RhaS (278 aa).

Residues 174 to 272 (NLLLAWLEDH…NWSPRDIRQG (99 aa)) enclose the HTH araC/xylS-type domain. 2 consecutive DNA-binding regions (H-T-H motif) follow at residues 191–212 (DAVAEQFSLSLRTLHRQLKQQT) and 239–262 (VTDIAYRCGFSDSNHFSTLFRREF).

In terms of assembly, binds DNA as a dimer.

The protein resides in the cytoplasm. Functionally, activates expression of the rhaBAD and rhaT operons. The protein is HTH-type transcriptional activator RhaS of Escherichia coli (strain SE11).